The primary structure comprises 370 residues: Cobalt-precorrin-5B C(1)-methyltransferase (370 aa).

The protein belongs to the CbiD family.

The enzyme catalyses Co-precorrin-5B + S-adenosyl-L-methionine = Co-precorrin-6A + S-adenosyl-L-homocysteine. Its pathway is cofactor biosynthesis; adenosylcobalamin biosynthesis; cob(II)yrinate a,c-diamide from sirohydrochlorin (anaerobic route): step 6/10. Catalyzes the methylation of C-1 in cobalt-precorrin-5B to form cobalt-precorrin-6A. The protein is Cobalt-precorrin-5B C(1)-methyltransferase of Trichormus variabilis (strain ATCC 29413 / PCC 7937) (Anabaena variabilis).